Consider the following 698-residue polypeptide: DNA ligase (698 aa).

Residues 40–44 (DDVYD), 89–90 (SL), and Glu-123 each bind NAD(+). Lys-125 acts as the N6-AMP-lysine intermediate in catalysis. Positions 146, 184, 300, and 324 each coordinate NAD(+). Residues Cys-417, Cys-420, Cys-435, and Cys-441 each coordinate Zn(2+). Positions 618-698 (SSASPVAGKA…EWLALTGAAD (81 aa)) constitute a BRCT domain.

The protein belongs to the NAD-dependent DNA ligase family. LigA subfamily. It depends on Mg(2+) as a cofactor. Mn(2+) serves as cofactor.

The enzyme catalyses NAD(+) + (deoxyribonucleotide)n-3'-hydroxyl + 5'-phospho-(deoxyribonucleotide)m = (deoxyribonucleotide)n+m + AMP + beta-nicotinamide D-nucleotide.. Its function is as follows. DNA ligase that catalyzes the formation of phosphodiester linkages between 5'-phosphoryl and 3'-hydroxyl groups in double-stranded DNA using NAD as a coenzyme and as the energy source for the reaction. It is essential for DNA replication and repair of damaged DNA. The sequence is that of DNA ligase from Paramagnetospirillum magneticum (strain ATCC 700264 / AMB-1) (Magnetospirillum magneticum).